The primary structure comprises 266 residues: Gap junction beta-4 protein (266 aa).

The stretch at 2–13 (NWGFLQGILSGV) is an intramembrane region. Over 14 to 20 (NKYSTAL) the chain is Cytoplasmic. Residues 21 to 40 (GRIWLSVVFIFRVLVYVVAA) traverse the membrane as a helical segment. At 41–73 (EEVWDDDQKDFICNTKQPGCPNVCYDEFFPVSH) the chain is on the extracellular side. 3 cysteine pairs are disulfide-bonded: C53-C175, C60-C169, and C64-C164. Residues 74 to 94 (VRLWALQLILVTCPSLLVVMH) form a helical membrane-spanning segment. The Cytoplasmic portion of the chain corresponds to 95 to 130 (VAYREERERKHRLKHGPNAPALYSNLSKKRGGLWWT). The chain crosses the membrane as a helical span at residues 131-151 (YLLSLIFKAAVDSGFLYIFHC). Topologically, residues 152-184 (IYKDYDMPRVVACSVTPCPHTVDCYIARPTEKK) are extracellular. Residues 185 to 205 (VFTYFMVVTAAICILLNLSEV) form a helical membrane-spanning segment. At 206-266 (VYLVGKRCME…MATVDAGVYP (61 aa)) the chain is on the cytoplasmic side.

This sequence belongs to the connexin family. Beta-type (group I) subfamily. As to quaternary structure, a hemichannel or connexon is composed of a hexamer of connexins. A functional gap junction is formed by the apposition of two hemichannels. Forms heteromeric channels with GJB2. Detected in cochlea (at protein level). Detected in cochlea. Expressed in skin.

It localises to the cell membrane. The protein localises to the cell junction. It is found in the gap junction. Structural component of gap junctions. Gap junctions are dodecameric channels that connect the cytoplasm of adjoining cells. They are formed by the docking of two hexameric hemichannels, one from each cell membrane. Small molecules and ions diffuse from one cell to a neighboring cell via the central pore. This chain is Gap junction beta-4 protein (Gjb4), found in Mus musculus (Mouse).